A 902-amino-acid chain; its full sequence is HTH-type transcriptional regulator MalT (902 aa).

39 to 46 (SPAGYGKT) serves as a coordination point for ATP. The HTH luxR-type domain occupies 832 to 897 (ELVRTSPLTQ…EAVQTAEQLL (66 aa)). A DNA-binding region (H-T-H motif) is located at residues 856–875 (NEQIAHELDVAGTTIKTHIR).

The protein belongs to the MalT family. As to quaternary structure, monomer in solution. Oligomerizes to an active state in the presence of the positive effectors ATP and maltotriose.

Its activity is regulated as follows. Activated by ATP and maltotriose, which are both required for DNA binding. Its function is as follows. Positively regulates the transcription of the maltose regulon whose gene products are responsible for uptake and catabolism of malto-oligosaccharides. Specifically binds to the promoter region of its target genes, recognizing a short DNA motif called the MalT box. This is HTH-type transcriptional regulator MalT from Vibrio cholerae serotype O1 (strain ATCC 39315 / El Tor Inaba N16961).